A 240-amino-acid chain; its full sequence is tRNA (guanine-N(7)-)-methyltransferase (240 aa).

Residues 1–10 are compositionally biased toward polar residues; sequence MTESQDTPIT. Residues 1–20 are disordered; the sequence is MTESQDTPITTDGEARPHRR. Positions 70, 95, 122, and 145 each coordinate S-adenosyl-L-methionine. Asp-145 is a catalytic residue. Substrate contacts are provided by residues Lys-149, Asp-181, and 218–221; that span reads TKFE.

It belongs to the class I-like SAM-binding methyltransferase superfamily. TrmB family.

It carries out the reaction guanosine(46) in tRNA + S-adenosyl-L-methionine = N(7)-methylguanosine(46) in tRNA + S-adenosyl-L-homocysteine. It functions in the pathway tRNA modification; N(7)-methylguanine-tRNA biosynthesis. Catalyzes the formation of N(7)-methylguanine at position 46 (m7G46) in tRNA. The sequence is that of tRNA (guanine-N(7)-)-methyltransferase from Pseudomonas putida (strain W619).